The sequence spans 94 residues: PqqA binding protein (94 aa).

It belongs to the PqqD family. As to quaternary structure, monomer. Interacts with PqqE.

Its pathway is cofactor biosynthesis; pyrroloquinoline quinone biosynthesis. Its function is as follows. Functions as a PqqA binding protein and presents PqqA to PqqE, in the pyrroloquinoline quinone (PQQ) biosynthetic pathway. In Acinetobacter baumannii (strain AB307-0294), this protein is PqqA binding protein.